The following is a 1823-amino-acid chain: Laminin subunit alpha-4 (1823 aa).

The signal sequence occupies residues 1 to 24 (MALSSAWRSVLPLWLLWSAACSRA). O-linked (Xyl...) (chondroitin sulfate) serine glycosylation is present at S39. 12 disulfide bridges follow: C82-C91, C84-C98, C101-C110, C113-C129, C132-C146, C134-C155, C157-C166, C169-C184, C187-C202, C189-C209, C212-C221, and C224-C238. Laminin EGF-like domains are found at residues 82–131 (CDCN…FCQP), 132–186 (CPCP…TCKK), and 187–240 (CDCS…NCAV). N104 is a glycosylation site (N-linked (GlcNAc...) asparagine). N-linked (GlcNAc...) asparagine glycosylation is present at N215. In terms of domain architecture, Laminin EGF-like 4; truncated spans 241–255 (CNCGGGPCDSVTGEC). The domain II and I stretch occupies residues 256-832 (LEEGFEPPTG…AQTRSVASKI (577 aa)). N-linked (GlcNAc...) asparagine glycosylation occurs at N315. The stretch at 320-403 (LLKTKLSERE…KIQEINNKML (84 aa)) forms a coiled coil. Residue N465 is glycosylated (N-linked (GlcNAc...) asparagine). Residues 473–528 (VVLEQLDDYNAKLSDLQEALDQALNYVRDAEDMNRATAARQRDHEKQQERVREQME) are a coiled coil. N-linked (GlcNAc...) asparagine glycans are attached at residues N531, N557, N578, N581, N638, and N646. Residues 581–614 (NLSHDLVQEAIDHAQDLQQEANELSRKLHSSDMN) are a coiled coil. Positions 662–724 (IIYHKDESEN…AVKQLQAAER (63 aa)) form a coiled coil. The short motif at 724-726 (RGD) is the Cell attachment site element. Residues N742, N758, N761, N787, and N810 are each glycosylated (N-linked (GlcNAc...) asparagine). Residues 777 to 806 (AVNSARDAVRNLTEVVPQLLDQLRTVEQKR) adopt a coiled-coil conformation. Laminin G-like domains are found at residues 833 to 1035 (QVSM…SVPC), 1047 to 1227 (AASY…GYGC), and 1234 to 1402 (SRRA…LYEC). A disulfide bridge connects residues C1005 and C1035. Residue N1093 is glycosylated (N-linked (GlcNAc...) asparagine). A disulfide bridge connects residues C1201 and C1227. N1288 and N1366 each carry an N-linked (GlcNAc...) asparagine glycan. C1370 and C1402 are disulfide-bonded. The N-linked (GlcNAc...) asparagine glycan is linked to N1418. A disordered region spans residues 1419 to 1440 (LSKPKASQNKKGGKSKDAPSWD). Laminin G-like domains follow at residues 1469 to 1640 (AYQY…VTPC) and 1647 to 1820 (TGTY…INSC). 2 disulfides stabilise this stretch: C1617/C1640 and C1792/C1820.

As to quaternary structure, laminin is a complex glycoprotein, consisting of three different polypeptide chains (alpha, beta, gamma), which are bound to each other by disulfide bonds into a cross-shaped molecule comprising one long and three short arms with globules at each end. Alpha-4 is a subunit of laminin-8 (laminin-411), laminin-9 (laminin-421) and laminin-14 (laminin-423). As to expression, detected in placenta (at protein level). Detected in fibroblasts and urine (at protein level). In adult, strong expression in heart, lung, ovary small and large intestines, placenta, liver; weak or no expression in skeletal muscle, kidney, pancreas, testis, prostate, brain. High expression in fetal lung and kidney. Expression in fetal and newborn tissues is observed in certain mesenchymal cells in tissues such as smooth muscle and dermis.

The protein resides in the secreted. It localises to the extracellular space. Its subcellular location is the extracellular matrix. It is found in the basement membrane. Functionally, binding to cells via a high affinity receptor, laminin is thought to mediate the attachment, migration and organization of cells into tissues during embryonic development by interacting with other extracellular matrix components. The protein is Laminin subunit alpha-4 (LAMA4) of Homo sapiens (Human).